The sequence spans 356 residues: Putative aminopeptidase FrvX (356 aa).

Residues H61 and D175 each coordinate a divalent metal cation. The active-site Proton acceptor is E205. Residues E206, D228, and H316 each coordinate a divalent metal cation.

Belongs to the peptidase M42 family. It depends on a divalent metal cation as a cofactor.

The sequence is that of Putative aminopeptidase FrvX (frvX) from Escherichia coli (strain K12).